The sequence spans 99 residues: Putative UPF0320 protein YDR543C (99 aa).

A disordered region spans residues 80–99 (EKSPPKSPKHKNILSFNNNT).

It belongs to the UPF0320 family.

The sequence is that of Putative UPF0320 protein YDR543C from Saccharomyces cerevisiae (strain ATCC 204508 / S288c) (Baker's yeast).